The following is a 174-amino-acid chain: Cytidylate kinase (174 aa).

7–15 (GLPGTGTTT) contributes to the ATP binding site.

Belongs to the cytidylate kinase family. Type 2 subfamily.

Its subcellular location is the cytoplasm. The enzyme catalyses CMP + ATP = CDP + ADP. The catalysed reaction is dCMP + ATP = dCDP + ADP. The chain is Cytidylate kinase from Methanococcus vannielii (strain ATCC 35089 / DSM 1224 / JCM 13029 / OCM 148 / SB).